Here is a 433-residue protein sequence, read N- to C-terminus: Arrestin domain-containing protein 1 (433 aa).

Disordered stretches follow at residues glycine 296–alanine 322 and leucine 349–proline 372. Over residues proline 301–proline 312 the composition is skewed to pro residues. 2 consecutive short sequence motifs (PPxY motif) follow at residues proline 402–tyrosine 405 and proline 415–tyrosine 418.

Belongs to the arrestin family. In terms of assembly, interacts (via PPxY motifs) with ITCH (via WW domains); the interaction is direct and participates in the recruitment of the ubiquitin-protein ligase ITCH to the NOTCH1 receptor. Interacts with ARRB1 and ARRB2; the interaction is direct. Interacts with TSG101; may recruit TSG101 to the plasma membrane. Interacts (via PPxY motifs) with WWP2 (via WW domains); ubiquitinates ARRDC1. Interacts with SLC11A2; controls the incorporation of SLC11A2 into extracellular vesicles through an ubiquitination-dependent mechanism. Interacts with WWP1 (via WW domains). Interacts with NEDD4 (via WW domains). Interacts with PDCD6IP. Ubiquitinated. Ubiquitination by WWP2; promotes localization to extracellular microvesicles. Ubiquitinated by WWP1.

The protein localises to the cell membrane. Functions as an adapter recruiting ubiquitin-protein ligases to their specific substrates. Through an ubiquitination-dependent mechanism plays for instance a role in the incorporation of SLC11A2 into extracellular vesicles. More generally, plays a role in the extracellular transport of proteins between cells through the release in the extracellular space of microvesicles. By participating in the ITCH-mediated ubiquitination and subsequent degradation of NOTCH1, negatively regulates the NOTCH signaling pathway. The protein is Arrestin domain-containing protein 1 of Homo sapiens (Human).